A 110-amino-acid polypeptide reads, in one-letter code: UPF0122 protein GWCH70_1086 (110 aa).

This sequence belongs to the UPF0122 family.

Might take part in the signal recognition particle (SRP) pathway. This is inferred from the conservation of its genetic proximity to ftsY/ffh. May be a regulatory protein. In Geobacillus sp. (strain WCH70), this protein is UPF0122 protein GWCH70_1086.